A 456-amino-acid chain; its full sequence is Cytochrome c biogenesis protein CcsB (456 aa).

Helical transmembrane passes span 29-49, 88-108, and 174-194; these read LRLAILLLLAIAIASATGTVI, AGWFLGLLILFGASLTACTFR, and VGPILVHAGMLVVLGGAIWGS.

It belongs to the Ccs1/CcsB family. May interact with CcsA.

The protein resides in the cellular thylakoid membrane. Its function is as follows. Required during biogenesis of c-type cytochromes (cytochrome c6 and cytochrome f) at the step of heme attachment. The sequence is that of Cytochrome c biogenesis protein CcsB from Synechococcus sp. (strain ATCC 27144 / PCC 6301 / SAUG 1402/1) (Anacystis nidulans).